We begin with the raw amino-acid sequence, 858 residues long: DNA mismatch repair protein MutS (858 aa).

Position 613–620 (613–620 (GPNMAGKS)) interacts with ATP.

The protein belongs to the DNA mismatch repair MutS family.

In terms of biological role, this protein is involved in the repair of mismatches in DNA. It is possible that it carries out the mismatch recognition step. This protein has a weak ATPase activity. In Dehalococcoides mccartyi (strain CBDB1), this protein is DNA mismatch repair protein MutS.